The following is a 385-amino-acid chain: S-adenosylmethionine synthase (385 aa).

Position 16 (His-16) interacts with ATP. Asp-18 is a Mg(2+) binding site. Residue Glu-44 coordinates K(+). L-methionine is bound by residues Glu-57 and Gln-100. The flexible loop stretch occupies residues 100–110; sequence QSPDINQGVDR. Residues 164-166, 230-231, Asp-239, 245-246, Ala-262, and Lys-266 each bind ATP; these read DGK, KF, and RK. Residue Asp-239 participates in L-methionine binding. Lys-270 lines the L-methionine pocket.

This sequence belongs to the AdoMet synthase family. As to quaternary structure, homotetramer; dimer of dimers. It depends on Mg(2+) as a cofactor. Requires K(+) as cofactor.

It is found in the cytoplasm. The enzyme catalyses L-methionine + ATP + H2O = S-adenosyl-L-methionine + phosphate + diphosphate. It functions in the pathway amino-acid biosynthesis; S-adenosyl-L-methionine biosynthesis; S-adenosyl-L-methionine from L-methionine: step 1/1. Its function is as follows. Catalyzes the formation of S-adenosylmethionine (AdoMet) from methionine and ATP. The overall synthetic reaction is composed of two sequential steps, AdoMet formation and the subsequent tripolyphosphate hydrolysis which occurs prior to release of AdoMet from the enzyme. This Helicobacter pylori (strain ATCC 700392 / 26695) (Campylobacter pylori) protein is S-adenosylmethionine synthase.